The chain runs to 511 residues: MKKRALVSVSDKTGVVEFVKGLLEQGIEVISTGGTKKLLEENGLQVIGISEVTGFPEIMDGRVKTLHPNIHGGLLAVRDNETHVAQMNELGMEPIDFVIVNLYPFKETIAKPDVTFADAIENIDIGGPTMIRSAAKNHKFVSVIVDPVDYDVVLAELKENGEVKEETKRKLAAKVFRHTAAYDALISNYLTEQMGEENPETLTVTFEKKQDLRYGENPHQKATFYKAPFAVTSSVAYAEQLHGKELSYNNINDADAALSIVKEFTEPAVVAVKHMNPCGVGVGTDIHEAYTRAYEADPVSIFGGIIAANREIDKATAEKLHEIFLEIIIAPSFSKEALEVLQSKKNLRLLTVNIEKATSASKKLTSVQGGLLVQEEDTLSLDESTISIPTKREPSEQEWKDLKLAWKVVKHVKSNAIVLAKDDMTIGVGAGQMNRVGSAKIAITQAGEKAQGSALASDAFFPMPDTVEEAAKAGITAIIQPGGSIRDEDSIKVADTYGIAMVFTGVRHFKH.

One can recognise an MGS-like domain in the interval 1 to 145 (MKKRALVSVS…KNHKFVSVIV (145 aa)).

This sequence belongs to the PurH family.

The catalysed reaction is (6R)-10-formyltetrahydrofolate + 5-amino-1-(5-phospho-beta-D-ribosyl)imidazole-4-carboxamide = 5-formamido-1-(5-phospho-D-ribosyl)imidazole-4-carboxamide + (6S)-5,6,7,8-tetrahydrofolate. It carries out the reaction IMP + H2O = 5-formamido-1-(5-phospho-D-ribosyl)imidazole-4-carboxamide. It functions in the pathway purine metabolism; IMP biosynthesis via de novo pathway; 5-formamido-1-(5-phospho-D-ribosyl)imidazole-4-carboxamide from 5-amino-1-(5-phospho-D-ribosyl)imidazole-4-carboxamide (10-formyl THF route): step 1/1. The protein operates within purine metabolism; IMP biosynthesis via de novo pathway; IMP from 5-formamido-1-(5-phospho-D-ribosyl)imidazole-4-carboxamide: step 1/1. This chain is Bifunctional purine biosynthesis protein PurH, found in Bacillus thuringiensis (strain Al Hakam).